We begin with the raw amino-acid sequence, 435 residues long: Monodehydroascorbate reductase 3, cytosolic (435 aa).

Residues 14 to 17 (GGVA), Glu41, Arg48, Lys53, Ile96, and 147 to 148 (RE) each bind FAD. NAD(+) contacts are provided by residues 172–178 (GGYIGLE), Glu196, Arg202, and Gly261. NADP(+) is bound at residue 174-178 (YIGLE). Residues Arg202 and Gly261 each contribute to the NADP(+) site. Residue Asp298 participates in FAD binding. NAD(+) is bound at residue 314–315 (EH). 314-315 (EH) is a binding site for NADP(+). Position 316 (Val316) interacts with FAD. Residue Arg320 coordinates L-ascorbate. FAD is bound at residue Tyr349. Tyr349 serves as a coordination point for NAD(+). Position 349 (Tyr349) interacts with NADP(+). Arg351 provides a ligand contact to L-ascorbate.

Belongs to the FAD-dependent oxidoreductase family. The cofactor is FAD.

It is found in the cytoplasm. It catalyses the reaction 2 monodehydro-L-ascorbate radical + NADH + H(+) = 2 L-ascorbate + NAD(+). In terms of biological role, catalyzes the conversion of monodehydroascorbate to ascorbate, oxidizing NADH in the process. Ascorbate is a major antioxidant against reactive oxygen species (ROS) and nitric oxide (NO). Can use NADPH as electron donor, but possesses lower activity compared to NADH as electron donor. This is Monodehydroascorbate reductase 3, cytosolic from Oryza sativa subsp. japonica (Rice).